A 70-amino-acid chain; its full sequence is Melittin-N (70 aa).

An N-terminal signal peptide occupies residues 1 to 21; sequence MKFLVNVALVFMVVYISYIYA. Positions 22–43 are cleaved as a propeptide — removed by a dipeptidylpeptidase; sequence APEPEPAPEPEAEADAEADPEA. Residue glycine 44 is modified to N-formylglycine; partial. Glutamine 69 carries the glutamine amide modification.

Belongs to the melittin family. As to quaternary structure, monomer (in solution and for integration into membranes), homotetramer (in solution and potentially as a toroidal pore in membranes), and potenially homomultimer (as a toroidal pore in membranes). In terms of tissue distribution, expressed by the venom gland.

It is found in the secreted. The protein resides in the target cell membrane. Functionally, main toxin of bee venom with strong hemolytic activity and antimicrobial activity. It has enhancing effects on bee venom phospholipase A2 activity. This amphipathic toxin binds to negatively charged membrane surface and forms pore by inserting into lipid bilayers inducing the leakage of ions and molecules and the enhancement of permeability that ultimately leads to cell lysis. It acts as a voltage-gated pore with higher selectivity for anions over cations. The ion conductance has been shown to be voltage-dependent. Self-association of melittin in membranes is promoted by high ionic strength, but not by the presence of negatively charged lipids. In vivo, intradermal injection into healthy human volunteers produce sharp pain sensation and an inflammatory response. It produces pain by activating primary nociceptor cells directly and indirectly due to its ability to activate plasma membrane phospholipase A2 and its pore-forming activity. Shows lower cytotoxicity when tested on E.coli and cancer cell lines than melittin, as well as lower anti-inflammatory properties and lower properties to interact to small unilamellar liposomes. The protein is Melittin-N (MELT) of Apis cerana (Indian honeybee).